The following is a 459-amino-acid chain: Alpha-N-acetylgalactosaminidase (459 aa).

A signal peptide (tat-type signal) is located at residues 1-31; the sequence is MHNIHRRHFLKAAGAVTAGLVTANIALNANA. Residues 64–65, Asp86, 135–138, 155–156, and Asn184 each bind NAD(+); these read ER, WEWH, and EV. Residues Tyr213, Arg232, 244–247, and Tyr326 each bind substrate; that span reads YPTH. Residue Tyr244 participates in NAD(+) binding.

It belongs to the Gfo/Idh/MocA family. Glycosyl hydrolase 109 subfamily. The cofactor is NAD(+). In terms of processing, predicted to be exported by the Tat system. The position of the signal peptide cleavage has not been experimentally proven.

It catalyses the reaction Cleavage of non-reducing alpha-(1-&gt;3)-N-acetylgalactosamine residues from human blood group A and AB mucin glycoproteins, Forssman hapten and blood group A lacto series glycolipids.. Its function is as follows. Glycosidase that has specific alpha-N-acetylgalactosaminidase activity. This is Alpha-N-acetylgalactosaminidase (nagA) from Shewanella oneidensis (strain ATCC 700550 / JCM 31522 / CIP 106686 / LMG 19005 / NCIMB 14063 / MR-1).